We begin with the raw amino-acid sequence, 88 residues long: UPF0297 protein GK2555 (88 aa).

This sequence belongs to the UPF0297 family.

The chain is UPF0297 protein GK2555 from Geobacillus kaustophilus (strain HTA426).